Here is a 143-residue protein sequence, read N- to C-terminus: Peptidyl-prolyl cis-trans isomerase B (143 aa).

The PPIase cyclophilin-type domain maps to methionine 1 to glycine 143.

This sequence belongs to the cyclophilin-type PPIase family.

It localises to the cytoplasm. It catalyses the reaction [protein]-peptidylproline (omega=180) = [protein]-peptidylproline (omega=0). With respect to regulation, inhibited by cyclosporin A (CsA). Its function is as follows. PPIases accelerate the folding of proteins. It catalyzes the cis-trans isomerization of proline imidic peptide bonds in oligopeptides. This is Peptidyl-prolyl cis-trans isomerase B (ppiB) from Bacillus subtilis (strain 168).